The chain runs to 84 residues: Defensin-like protein 172 (84 aa).

Positions 1 to 23 (MAKASSTLVLSIIFLVMFALVEQ) are cleaved as a signal peptide. 4 cysteine pairs are disulfide-bonded: C27–C74, C34–C56, C40–C68, and C44–C70.

The protein belongs to the DEFL family.

It localises to the secreted. The protein is Defensin-like protein 172 (LCR60) of Arabidopsis thaliana (Mouse-ear cress).